Reading from the N-terminus, the 370-residue chain is Putative F-box protein At1g46984 (370 aa).

The F-box domain occupies 18–64; that stretch reads YTQLSTLPIDLIIEILSRLPMNSIAICRLVSKQWASILQSSDFTESF.

This chain is Putative F-box protein At1g46984, found in Arabidopsis thaliana (Mouse-ear cress).